A 158-amino-acid polypeptide reads, in one-letter code: Ribosomal RNA large subunit methyltransferase H (158 aa).

S-adenosyl-L-methionine is bound by residues L74, G105, and 124-129; that span reads LGPLTL.

This sequence belongs to the RNA methyltransferase RlmH family. In terms of assembly, homodimer.

The protein localises to the cytoplasm. The enzyme catalyses pseudouridine(1915) in 23S rRNA + S-adenosyl-L-methionine = N(3)-methylpseudouridine(1915) in 23S rRNA + S-adenosyl-L-homocysteine + H(+). Functionally, specifically methylates the pseudouridine at position 1915 (m3Psi1915) in 23S rRNA. The protein is Ribosomal RNA large subunit methyltransferase H of Xylella fastidiosa (strain 9a5c).